The sequence spans 328 residues: 3-dehydroquinate synthase (328 aa).

Belongs to the archaeal-type DHQ synthase family.

The catalysed reaction is 2-amino-2,3,7-trideoxy-D-lyxo-hept-6-ulosonate + NAD(+) + H2O = 3-dehydroquinate + NH4(+) + NADH + H(+). In terms of biological role, catalyzes the oxidative deamination and cyclization of 2-amino-3,7-dideoxy-D-threo-hept-6-ulosonic acid (ADH) to yield 3-dehydroquinate (DHQ), which is fed into the canonical shikimic pathway of aromatic amino acid biosynthesis. The chain is 3-dehydroquinate synthase from Methanospirillum hungatei JF-1 (strain ATCC 27890 / DSM 864 / NBRC 100397 / JF-1).